The primary structure comprises 557 residues: Vanadium-dependent bromoperoxidase (557 aa).

Position 1 is a pyrrolidone carboxylic acid (Gln-1). Residues 1-22 (QTCSTSDDADDPTPPNERDDEA) form a disordered region. An intrachain disulfide couples Cys-77 to Cys-86. Positions 341 and 349 each coordinate vanadate. His-411 is a catalytic residue. Ser-416, Gly-417, and His-418 together coordinate vanadate. His-418 is an active-site residue. Cys-441 and Cys-462 form a disulfide bridge. The vanadate site is built by Arg-480 and His-486. Cys-544 and Cys-555 are disulfide-bonded.

Belongs to the vanadium-dependent haloperoxidase family. As to quaternary structure, homodimer; disulfide-linked. Vanadate is required as a cofactor.

It catalyses the reaction RH + Br(-) + H2O2 = RBr + 2 H2O.. Functionally, catalyzes the halogenation of organic substrates in the presence of hydrogen peroxide. In Ascophyllum nodosum (Knotted wrack), this protein is Vanadium-dependent bromoperoxidase.